The primary structure comprises 666 residues: Transmembrane protein 201 (666 aa).

N-acetylmethionine is present on methionine 1. Residues 1–213 (MEGVSALLAR…FSSAVKSPVQ (213 aa)) are Nuclear-facing. Residues 214–234 (VILLRALAFLACAFLLTTALY) form a helical membrane-spanning segment. At 235–297 (GASGHFAPGT…EAWAFGQSHQ (63 aa)) the chain is on the perinuclear space side. Residues 298 to 318 (TGVVALGLLTCLLAMLLAGRI) form a helical membrane-spanning segment. At 319 to 322 (RLRR) the chain is on the nuclear side. Residues 323–343 (IDAFCTCLWALLLGLHLAEQH) form a helical membrane-spanning segment. Residues 344–356 (LQAASPSWLDTLK) are Perinuclear space-facing. A helical transmembrane segment spans residues 357-374 (FSTTSLCCLVGFTAAVAT). Residues 375–644 (RKATGPRRFR…GRFGPSLVRG (270 aa)) are Nuclear-facing. A phosphoserine mark is found at serine 441, serine 444, serine 450, serine 454, serine 466, serine 477, and serine 480. The disordered stretch occupies residues 502 to 581 (PLPSPAPSVA…PPHVPRKPPL (80 aa)). Positions 508–520 (PSVAGSVASSSGS) are enriched in low complexity. Serine 529 carries the post-translational modification Phosphoserine. A helical transmembrane segment spans residues 645–665 (LLAVSLAANALFTSVFLYQSL). Residue arginine 666 is a topological domain, perinuclear space.

The protein belongs to the TMEM201 family. As to quaternary structure, interacts with SUN2 and LMNA. May bind to Ran GTPase; has a greater affinity for Ran-GTP over Ran-GDP. Interacts with EMD.

Its subcellular location is the nucleus inner membrane. It is found in the cytoplasm. The protein resides in the cytoskeleton. It localises to the spindle pole. Its function is as follows. Critical regulator of angiogenesis and endothelial cell (EC) migration. Promotes the migration of endothelial cells, which is essential for angiogenesis. Interacts with the linker of nucleoskeleton and cytoskeleton (LINC) complex, which plays a vital role in connecting the cell's cytoskeleton to the nuclear envelope. This interaction is essential for maintaining cellular structure and facilitating the movement of endothelial cells, which is critical for proper vascular development. Involved in nuclear movement during fibroblast polarization and migration. Overexpression can recruit Ran GTPase to the nuclear periphery. Functionally, may define a distinct membrane domain in the vicinity of the mitotic spindle. Involved in the organization of the nuclear envelope implicating EMD, SUN1 and A-type lamina. The sequence is that of Transmembrane protein 201 (TMEM201) from Homo sapiens (Human).